A 175-amino-acid chain; its full sequence is Alkyl hydroperoxide reductase AhpD (175 aa).

Residue Cys-131 is the Proton donor of the active site. Cysteines 131 and 134 form a disulfide. Cys-134 acts as the Cysteine sulfenic acid (-SOH) intermediate in catalysis.

It belongs to the AhpD family.

It catalyses the reaction N(6)-[(R)-dihydrolipoyl]-L-lysyl-[lipoyl-carrier protein] + a hydroperoxide = N(6)-[(R)-lipoyl]-L-lysyl-[lipoyl-carrier protein] + an alcohol + H2O. In terms of biological role, antioxidant protein with alkyl hydroperoxidase activity. Required for the reduction of the AhpC active site cysteine residues and for the regeneration of the AhpC enzyme activity. The sequence is that of Alkyl hydroperoxide reductase AhpD from Brucella anthropi (strain ATCC 49188 / DSM 6882 / CCUG 24695 / JCM 21032 / LMG 3331 / NBRC 15819 / NCTC 12168 / Alc 37) (Ochrobactrum anthropi).